Here is a 568-residue protein sequence, read N- to C-terminus: Phosphoprotein (568 aa).

A disordered region spans residues 1 to 23 (MDQDALISKEDSEVEREASGGRE). The segment covering 7-20 (ISKEDSEVEREASG) has biased composition (basic and acidic residues). An N0 binding region spans residues 33–41 (DAVLSSEPT). Positions 54-317 (INTLQRPGST…SPETDATKKG (264 aa)) are disordered. Basic and acidic residues-rich tracts occupy residues 99–110 (AEAHARNVDKQN), 150–168 (GAEDENREMAANPDKRGED), and 175–193 (EEIRRSAPLPDEREGRADN). Phosphoserine; by host occurs at positions 249, 257, and 260. The interval 344-411 (FESSRDASYV…SFRDIYKRFS (68 aa)) is multimerization. Positions 364–429 (YAEMAFNVCG…LLMSNLSTLH (66 aa)) form a coiled coil. Positions 412–445 (EYQKEQNSLLMSNLSTLHIITDRGGKTDNPDSPT) are l protein binding. The interval 433-462 (DRGGKTDNPDSPTRSPSVFAKTKENKTKAT) is disordered. 2 positions are modified to phosphoserine; by host: S447 and S449. Over residues 453–462 (KTKENKTKAT) the composition is skewed to basic and acidic residues. Residues 479–568 (DLLREDEFRE…VEEDIESLTN (90 aa)) form an interaction with the nucleocapsid (N-RNA) region.

It belongs to the respirovirus P protein family. In terms of assembly, homotetramer. Interacts (via multimerization domain) with polymerase L; this interaction forms the polymerase complex. Interacts (via N-terminus) with N0; this interaction allows P to chaperon N0 before encapsidation and form the N-P complex. Interacts (via C-terminus) with N-RNA template; this interaction positions the polymerase on the template. Post-translationally, phosphorylated by PKC/PRKCZ, and other unknown kinases. Phosphorylation is necessary for viral transcription and replication. The N-terminus contains the majority of phosphorylated sites. Ser-249 is the major site of phosphorylation, but is not necessary for most functions.

The protein resides in the host cytoplasm. Its function is as follows. Essential cofactor of the RNA polymerase L that plays a central role in the transcription and replication by forming the polymerase complex with RNA polymerase L and recruiting L to the genomic N-RNA template for RNA synthesis. Also plays a central role in the encapsidation of nascent RNA chains by forming the encapsidation complex with the nucleocapsid protein N (N-P complex). Acts as a chaperone for newly synthesized free N protein, so-called N0, allowing encapsidation of nascent RNA chains during replication. The nucleoprotein protein N prevents excessive phosphorylation of P, which leads to down-regulation of viral transcription/ replication. Participates, together with N, in the formation of viral factories (viroplasms), which are large inclusions in the host cytoplasm where replication takes place. Recruits host PI4KB and remodel the host endoplasmic reticulum membrane to form viral replication factories. The sequence is that of Phosphoprotein (P/V/C) from Sendai virus (strain Ohita) (SeV).